The chain runs to 128 residues: Fluoride-specific ion channel FluC 1 (128 aa).

The next 4 membrane-spanning stretches (helical) occupy residues 10 to 30 (VAFF…AFSF), 32 to 52 (GTVI…YFFL), 59 to 79 (AWLT…FSSF), and 93 to 113 (FGAL…AWAG). 2 residues coordinate Na(+): glycine 71 and threonine 74.

Belongs to the fluoride channel Fluc/FEX (TC 1.A.43) family.

It localises to the cell membrane. The enzyme catalyses fluoride(in) = fluoride(out). Na(+) is not transported, but it plays an essential structural role and its presence is essential for fluoride channel function. In terms of biological role, fluoride-specific ion channel. Important for reducing fluoride concentration in the cell, thus reducing its toxicity. The sequence is that of Fluoride-specific ion channel FluC 1 from Lactobacillus delbrueckii subsp. bulgaricus (strain ATCC 11842 / DSM 20081 / BCRC 10696 / JCM 1002 / NBRC 13953 / NCIMB 11778 / NCTC 12712 / WDCM 00102 / Lb 14).